Reading from the N-terminus, the 493-residue chain is E3 ubiquitin-protein ligase Hakai (493 aa).

Disordered stretches follow at residues 1 to 20 (MDHNDNDLQGTNSSASLGGL) and 28 to 61 (IKLISKQTNKTKPAPRAPRAMNRMPAKTQAGDEE). A compositionally biased stretch (polar residues) spans 7-16 (DLQGTNSSAS). The RING-type zinc finger occupies 109 to 149 (CDKCGLPIKMYGRMIPCKHVFCYDCAILHEKKGDKMCPGCN). An HYB domain region spans residues 148-206 (CNEPVQRIEQCVRGSLFMCSIVQGCKRTYLSQRDLQAHINHRHMRAGKPVTRPPLEPVH). A C2H2-type zinc finger spans residues 164-190 (FMCSIVQGCKRTYLSQRDLQAHINHRH). Residues 253–493 (YNQPHEDIRP…DQARYRPYYQ (241 aa)) are disordered. Pro residues-rich tracts occupy residues 262-276 (PPPAEMSMAPPPPRP), 342-352 (APPPPPPPPIS), 372-389 (APPPPMTSAPPPITPPPG), and 399-412 (MNHPPPGPPPPQHG). Polar residues predominate over residues 427–444 (NPNSLPQFSEDQGTLSPP). Pro residues predominate over residues 459–469 (PRGPPPPPRMQ). Residues 470–480 (GPPAQAPLAGP) show a composition bias toward low complexity.

Belongs to the Hakai family. In terms of assembly, homodimer. Interacts with tyrosine-phosphorylated SRC substrates. Component of the WMM complex, a N6-methyltransferase complex composed of a catalytic subcomplex, named MAC, and of an associated subcomplex, named MACOM. Component of the MACOM subcomplex.

It is found in the nucleus speckle. It localises to the nucleus. Its subcellular location is the nucleoplasm. The enzyme catalyses S-ubiquitinyl-[E2 ubiquitin-conjugating enzyme]-L-cysteine + [acceptor protein]-L-lysine = [E2 ubiquitin-conjugating enzyme]-L-cysteine + N(6)-ubiquitinyl-[acceptor protein]-L-lysine.. The protein operates within protein modification; protein ubiquitination. Its function is as follows. E3 ubiquitin-protein ligase that mediates ubiquitination of several tyrosine-phosphorylated Src substrates. Associated component of the WMM complex, a complex that mediates N6-methyladenosine (m6A) methylation of RNAs, a modification that plays a role in the efficiency of mRNA splicing and RNA processing. The protein is E3 ubiquitin-protein ligase Hakai of Gallus gallus (Chicken).